A 409-amino-acid polypeptide reads, in one-letter code: NADH-quinone oxidoreductase subunit D (409 aa).

It belongs to the complex I 49 kDa subunit family. As to quaternary structure, NDH-1 is composed of 14 different subunits. Subunits NuoB, C, D, E, F, and G constitute the peripheral sector of the complex.

The protein localises to the cell inner membrane. The enzyme catalyses a quinone + NADH + 5 H(+)(in) = a quinol + NAD(+) + 4 H(+)(out). Its function is as follows. NDH-1 shuttles electrons from NADH, via FMN and iron-sulfur (Fe-S) centers, to quinones in the respiratory chain. The immediate electron acceptor for the enzyme in this species is believed to be ubiquinone. Couples the redox reaction to proton translocation (for every two electrons transferred, four hydrogen ions are translocated across the cytoplasmic membrane), and thus conserves the redox energy in a proton gradient. The sequence is that of NADH-quinone oxidoreductase subunit D from Helicobacter pylori (strain P12).